The following is a 427-amino-acid chain: Peptidase B (427 aa).

Residues K195 and D200 each coordinate Mn(2+). K207 is an active-site residue. Mn(2+) contacts are provided by D218, D277, and E279. Residue R281 is part of the active site.

This sequence belongs to the peptidase M17 family. In terms of assembly, homohexamer. Mn(2+) is required as a cofactor.

It localises to the cytoplasm. It catalyses the reaction Release of an N-terminal amino acid, Xaa, from a peptide or arylamide. Xaa is preferably Glu or Asp but may be other amino acids, including Leu, Met, His, Cys and Gln.. Its function is as follows. Probably plays an important role in intracellular peptide degradation. This is Peptidase B from Salmonella dublin (strain CT_02021853).